The following is a 261-amino-acid chain: Indole-3-glycerol phosphate synthase (261 aa).

The protein belongs to the TrpC family.

The enzyme catalyses 1-(2-carboxyphenylamino)-1-deoxy-D-ribulose 5-phosphate + H(+) = (1S,2R)-1-C-(indol-3-yl)glycerol 3-phosphate + CO2 + H2O. It participates in amino-acid biosynthesis; L-tryptophan biosynthesis; L-tryptophan from chorismate: step 4/5. This Campylobacter hominis (strain ATCC BAA-381 / DSM 21671 / CCUG 45161 / LMG 19568 / NCTC 13146 / CH001A) protein is Indole-3-glycerol phosphate synthase.